The following is a 147-amino-acid chain: uncharacterized protein (147 aa).

The interval 30-102 is disordered; the sequence is GRCEQVALSS…TPPTRPESIF (73 aa). Over residues 62–71 the composition is skewed to polar residues; that stretch reads RPSTGETFVQ.

This is an uncharacterized protein from Homo sapiens (Human).